Here is a 388-residue protein sequence, read N- to C-terminus: Chorismate synthase (388 aa).

Residues Arg-39 and Arg-45 each contribute to the NADP(+) site. FMN is bound by residues 130 to 132 (RSS), 251 to 252 (NA), Gly-296, 311 to 315 (KPIPT), and Arg-337.

Belongs to the chorismate synthase family. In terms of assembly, homotetramer. FMNH2 is required as a cofactor.

It catalyses the reaction 5-O-(1-carboxyvinyl)-3-phosphoshikimate = chorismate + phosphate. Its pathway is metabolic intermediate biosynthesis; chorismate biosynthesis; chorismate from D-erythrose 4-phosphate and phosphoenolpyruvate: step 7/7. In terms of biological role, catalyzes the anti-1,4-elimination of the C-3 phosphate and the C-6 proR hydrogen from 5-enolpyruvylshikimate-3-phosphate (EPSP) to yield chorismate, which is the branch point compound that serves as the starting substrate for the three terminal pathways of aromatic amino acid biosynthesis. This reaction introduces a second double bond into the aromatic ring system. In Streptococcus sanguinis (strain SK36), this protein is Chorismate synthase.